A 603-amino-acid chain; its full sequence is Probable methyltransferase PMT4 (603 aa).

The Cytoplasmic portion of the chain corresponds to 1–12 (MKVASVIGLRPR). Residues 13-33 (ISGLLFLTLGVIALITILVPN) form a helical; Signal-anchor for type II membrane protein membrane-spanning segment. Topologically, residues 34–603 (SDSSSTTSTT…LVCQKPLLKK (570 aa)) are lumenal. 2 N-linked (GlcNAc...) asparagine glycosylation sites follow: asparagine 96 and asparagine 393.

It belongs to the methyltransferase superfamily.

The protein localises to the endoplasmic reticulum membrane. This is Probable methyltransferase PMT4 from Arabidopsis thaliana (Mouse-ear cress).